The chain runs to 480 residues: Aspartyl/glutamyl-tRNA(Asn/Gln) amidotransferase subunit B (480 aa).

The protein belongs to the GatB/GatE family. GatB subfamily. As to quaternary structure, heterotrimer of A, B and C subunits.

The catalysed reaction is L-glutamyl-tRNA(Gln) + L-glutamine + ATP + H2O = L-glutaminyl-tRNA(Gln) + L-glutamate + ADP + phosphate + H(+). It carries out the reaction L-aspartyl-tRNA(Asn) + L-glutamine + ATP + H2O = L-asparaginyl-tRNA(Asn) + L-glutamate + ADP + phosphate + 2 H(+). Allows the formation of correctly charged Asn-tRNA(Asn) or Gln-tRNA(Gln) through the transamidation of misacylated Asp-tRNA(Asn) or Glu-tRNA(Gln) in organisms which lack either or both of asparaginyl-tRNA or glutaminyl-tRNA synthetases. The reaction takes place in the presence of glutamine and ATP through an activated phospho-Asp-tRNA(Asn) or phospho-Glu-tRNA(Gln). This chain is Aspartyl/glutamyl-tRNA(Asn/Gln) amidotransferase subunit B, found in Caldicellulosiruptor saccharolyticus (strain ATCC 43494 / DSM 8903 / Tp8T 6331).